Here is a 1478-residue protein sequence, read N- to C-terminus: ATP-binding cassette transporter abc2 (1478 aa).

The Vacuolar portion of the chain corresponds to 1–25; it reads MVLEQDLDPFVGGNWMNSAYKGFTF. A helical membrane pass occupies residues 26 to 46; it reads LSATWLAPNIYLLISGCLQYF. The Cytoplasmic portion of the chain corresponds to 47-65; that stretch reads YEVRKRSHYFHFRRFWTIW. A helical transmembrane segment spans residues 66–85; that stretch reads LKSLVIMVLLFTHIYDCYKT. The N-linked (GlcNAc...) asparagine glycan is linked to asparagine 86. Topologically, residues 86-90 are vacuolar; that stretch reads NESVW. The helical transmembrane segment at 91 to 104 threads the bilayer; the sequence is NVLSIITYFLALFL. Topologically, residues 105–116 are cytoplasmic; that stretch reads HVVEQPTLRIPM. The helical transmembrane segment at 117 to 137 threads the bilayer; that stretch reads ASLLMFWLFKFLASALVLLLR. The Vacuolar portion of the chain corresponds to 138-154; it reads PNYTMFPMLNVVPSITF. A glycan (N-linked (GlcNAc...) asparagine) is linked at asparagine 139. The helical transmembrane segment at 155 to 175 threads the bilayer; the sequence is FCSLVCLLAEIYVPPANRVWY. Over 176–259 the chain is Cytoplasmic; that stretch reads PDDAAELEET…KKSSLYMWGV (84 aa). Residues 260 to 280 traverse the membrane as a helical segment; that stretch reads LFLNHWKLTVVIIVLKLVQDV. One can recognise an ABC transmembrane type-1 1 domain in the interval 268–557; sequence TVVIIVLKLV…LPIVVSSVLE (290 aa). Over 281–310 the chain is Vacuolar; that stretch reads VAFIQPNLIRKIVIFVSSYSSEHPQPPQVG. Residues 311-331 form a helical membrane-spanning segment; sequence FSLAIAMFLTNVVQTALLQQY. Topologically, residues 332–387 are cytoplasmic; the sequence is FQLGMVLGMRWRSELITAIYRKSLRLSSAARQSRSVGDIVNYMSVDTQKVCDLTMF. The chain crosses the membrane as a helical span at residues 388–408; that stretch reads LFVIVSGPFQIVLALTNLYHL. At 409-411 the chain is on the vacuolar side; that stretch reads VGY. The chain crosses the membrane as a helical span at residues 412-432; that stretch reads GALSGAFVTFLLFPCNVVIAS. The Cytoplasmic portion of the chain corresponds to 433–495; the sequence is IFKRFQNRQM…MLKKIGIVNT (63 aa). Residues 496-516 traverse the membrane as a helical segment; the sequence is IGNFTWLFAPILVSAATFGTF. The Vacuolar portion of the chain corresponds to 517-539; it reads IVLYGKTRVLSVDIVFACLSLFN. A helical membrane pass occupies residues 540 to 560; sequence LLQFPLTMLPIVVSSVLEASV. The Cytoplasmic portion of the chain corresponds to 561-910; the sequence is AISRIYGFLT…VKWKVYWTYF (350 aa). Positions 593-821 constitute an ABC transporter 1 domain; the sequence is LEIKKGTFSW…PDSQLFQLLS (229 aa). 631 to 638 serves as a coordination point for ATP; that stretch reads GKVGMGKS. Positions 828–867 are disordered; the sequence is TASSTGADTPLSRSQSVITSSTDVTSSASRSSDTVSNYPK. Polar residues predominate over residues 829–840; sequence ASSTGADTPLSR. Phosphoserine occurs at positions 839, 843, and 863. A compositionally biased stretch (low complexity) spans 841-863; the sequence is SQSVITSSTDVTSSASRSSDTVS. A helical membrane pass occupies residues 911–931; sequence KACSLFLIFLYFLFIIGGIGM. The region spanning 918–1202 is the ABC transmembrane type-1 2 domain; sequence IFLYFLFIIG…VVRQSVDVET (285 aa). The Vacuolar portion of the chain corresponds to 932–968; that stretch reads NVGTNVWLKHWSEVNTQLGYNPKPYFYLGIYTLFGLL. A helical transmembrane segment spans residues 969–990; that stretch reads SCALISLSSLTITVFCAIKSCR. The Cytoplasmic portion of the chain corresponds to 991–1033; the sequence is YLHDSMVKAVLRAPMSFFETTPTGRILNRFSSDVYRVDEVISR. Residues 1034 to 1054 traverse the membrane as a helical segment; sequence VFMFFFRNLFQIVFVLAVICY. A topological domain (vacuolar) is located at residue serine 1055. A helical membrane pass occupies residues 1056-1076; sequence SPMFMILIVPLFFLYRYNQVY. The Cytoplasmic portion of the chain corresponds to 1077–1147; sequence YTQTSRELKR…SSNRWQAIRV (71 aa). Residues 1148 to 1168 traverse the membrane as a helical segment; sequence EAIGALVVFSSAFFGVLSAVR. Over 1169–1172 the chain is Vacuolar; that stretch reads GNPN. Residues 1173-1193 traverse the membrane as a helical segment; sequence SGLVGLSLSYAVQITQSLTFV. Residues 1194–1478 lie on the Cytoplasmic side of the membrane; it reads VRQSVDVETN…YSLAKESGLI (285 aa). Positions 1239–1473 constitute an ABC transporter 2 domain; sequence IKFDHYSVRY…KASLFYSLAK (235 aa). 1273–1280 is an ATP binding site; it reads GRTGAGKS.

Belongs to the ABC transporter superfamily. ABCC family. Conjugate transporter (TC 3.A.1.208) subfamily.

The protein localises to the vacuole membrane. Involved in vacuolar sequestration of glutathione S-conjugates. Together with abc4, required for accumulation of a red pigment (ade pigment) in the vacuole of a mutant affected in the adenine biosynthetic pathway. This is ATP-binding cassette transporter abc2 (abc2) from Schizosaccharomyces pombe (strain 972 / ATCC 24843) (Fission yeast).